Reading from the N-terminus, the 613-residue chain is Ectonucleoside triphosphate diphosphohydrolase 4 (613 aa).

Topologically, residues M1–Q33 are cytoplasmic. The chain crosses the membrane as a helical span at residues I34–I54. The Lumenal portion of the chain corresponds to R55 to S559. E222 acts as the Proton acceptor in catalysis. C368 and C395 form a disulfide bridge. N-linked (GlcNAc...) asparagine glycosylation is found at N404 and N407. A disulfide bridge connects residues C461 and C490. A helical transmembrane segment spans residues F560–L580. The Cytoplasmic portion of the chain corresponds to Y581–L613.

Belongs to the GDA1/CD39 NTPase family. It depends on Ca(2+) as a cofactor. The cofactor is Mg(2+). Ubiquitous.

It is found in the cytoplasmic vesicle. It localises to the autophagosome membrane. The protein localises to the lysosome membrane. Its subcellular location is the golgi apparatus membrane. The enzyme catalyses a ribonucleoside 5'-triphosphate + H2O = a ribonucleoside 5'-diphosphate + phosphate + H(+). It carries out the reaction a ribonucleoside 5'-diphosphate + H2O = a ribonucleoside 5'-phosphate + phosphate + H(+). The catalysed reaction is UDP + H2O = UMP + phosphate + H(+). It catalyses the reaction UTP + H2O = UDP + phosphate + H(+). The enzyme catalyses CTP + H2O = CDP + phosphate + H(+). It carries out the reaction GDP + H2O = GMP + phosphate + H(+). The catalysed reaction is 5-methyl-UTP + H2O = 5-methyl-UDP + phosphate + H(+). Functionally, catalyzes the hydrolysis of nucleoside triphosphates and diphosphates in a calcium- or magnesium-dependent manner, with a preference for pyrimidines. Preferentially hydrolyzes UTP and TTP on UTP and TTP. AMP, ADP, ATP and UMP are not substrates. Preferentially activated by Ca(2+) over Mg(2+). Has a broad substrate specificity with the ability of cleaving all nucleotide di- and triphosphates with the exception of adenosine di- and triphosphate (ADP and ATP). Preferentially hydrolyzes CTP, UDP, CDP, GTP and GDP. Can use either Ca(2+) or Mg(2+) equally. This Mus musculus (Mouse) protein is Ectonucleoside triphosphate diphosphohydrolase 4 (Entpd4).